The sequence spans 140 residues: Fluoride-specific ion channel FluC 1 (140 aa).

Transmembrane regions (helical) follow at residues Thr3–Ala23, Ala38–Leu58, Ile80–Met100, and Ile113–Cys133. Na(+) contacts are provided by Gly91 and Thr94.

The protein belongs to the fluoride channel Fluc/FEX (TC 1.A.43) family.

The protein resides in the cell membrane. It carries out the reaction fluoride(in) = fluoride(out). Its activity is regulated as follows. Na(+) is not transported, but it plays an essential structural role and its presence is essential for fluoride channel function. Its function is as follows. Fluoride-specific ion channel. Important for reducing fluoride concentration in the cell, thus reducing its toxicity. This Corynebacterium jeikeium (strain K411) protein is Fluoride-specific ion channel FluC 1.